The chain runs to 614 residues: UvrABC system protein C (614 aa).

One can recognise a GIY-YIG domain in the interval S16–V94. The region spanning G204–V239 is the UVR domain.

This sequence belongs to the UvrC family. Interacts with UvrB in an incision complex.

The protein localises to the cytoplasm. The UvrABC repair system catalyzes the recognition and processing of DNA lesions. UvrC both incises the 5' and 3' sides of the lesion. The N-terminal half is responsible for the 3' incision and the C-terminal half is responsible for the 5' incision. The protein is UvrABC system protein C of Hyphomonas neptunium (strain ATCC 15444).